Reading from the N-terminus, the 189-residue chain is Crossover junction endodeoxyribonuclease RuvC (189 aa).

Active-site residues include D7, E68, and D141. Residues D7, E68, and D141 each contribute to the Mg(2+) site.

This sequence belongs to the RuvC family. In terms of assembly, homodimer which binds Holliday junction (HJ) DNA. The HJ becomes 2-fold symmetrical on binding to RuvC with unstacked arms; it has a different conformation from HJ DNA in complex with RuvA. In the full resolvosome a probable DNA-RuvA(4)-RuvB(12)-RuvC(2) complex forms which resolves the HJ. Requires Mg(2+) as cofactor.

The protein localises to the cytoplasm. It catalyses the reaction Endonucleolytic cleavage at a junction such as a reciprocal single-stranded crossover between two homologous DNA duplexes (Holliday junction).. The RuvA-RuvB-RuvC complex processes Holliday junction (HJ) DNA during genetic recombination and DNA repair. Endonuclease that resolves HJ intermediates. Cleaves cruciform DNA by making single-stranded nicks across the HJ at symmetrical positions within the homologous arms, yielding a 5'-phosphate and a 3'-hydroxyl group; requires a central core of homology in the junction. The consensus cleavage sequence is 5'-(A/T)TT(C/G)-3'. Cleavage occurs on the 3'-side of the TT dinucleotide at the point of strand exchange. HJ branch migration catalyzed by RuvA-RuvB allows RuvC to scan DNA until it finds its consensus sequence, where it cleaves and resolves the cruciform DNA. This Nocardia farcinica (strain IFM 10152) protein is Crossover junction endodeoxyribonuclease RuvC.